Here is a 123-residue protein sequence, read N- to C-terminus: Transmembrane protein 80 (123 aa).

The next 4 helical transmembrane spans lie at 2–22, 35–55, 68–88, and 102–122; these read LFHL…LMIV, LALD…QLYL, LAAS…FLLW, and VLLV…ADFI.

It is found in the membrane. The protein resides in the cell projection. Its subcellular location is the cilium. This chain is Transmembrane protein 80 (Tmem80), found in Mus musculus (Mouse).